A 550-amino-acid chain; its full sequence is Chaperonin GroEL (550 aa).

ATP-binding positions include 30–33, Lys-51, 87–91, Gly-415, and Asp-496; these read TLGP and DGTTT.

The protein belongs to the chaperonin (HSP60) family. Forms a cylinder of 14 subunits composed of two heptameric rings stacked back-to-back. Interacts with the co-chaperonin GroES.

The protein resides in the cytoplasm. The enzyme catalyses ATP + H2O + a folded polypeptide = ADP + phosphate + an unfolded polypeptide.. Its function is as follows. Together with its co-chaperonin GroES, plays an essential role in assisting protein folding. The GroEL-GroES system forms a nano-cage that allows encapsulation of the non-native substrate proteins and provides a physical environment optimized to promote and accelerate protein folding. In Rickettsia bellii (strain OSU 85-389), this protein is Chaperonin GroEL.